The primary structure comprises 336 residues: tRNA N6-adenosine threonylcarbamoyltransferase (336 aa).

Positions 114 and 118 each coordinate Fe cation. Residues 136 to 140 (LVSGG), Asp169, Gly182, Asp186, and Asn275 each bind substrate. Asp301 is a binding site for Fe cation.

Belongs to the KAE1 / TsaD family. The cofactor is Fe(2+).

The protein localises to the cytoplasm. It catalyses the reaction L-threonylcarbamoyladenylate + adenosine(37) in tRNA = N(6)-L-threonylcarbamoyladenosine(37) in tRNA + AMP + H(+). Its function is as follows. Required for the formation of a threonylcarbamoyl group on adenosine at position 37 (t(6)A37) in tRNAs that read codons beginning with adenine. Is involved in the transfer of the threonylcarbamoyl moiety of threonylcarbamoyl-AMP (TC-AMP) to the N6 group of A37, together with TsaE and TsaB. TsaD likely plays a direct catalytic role in this reaction. This chain is tRNA N6-adenosine threonylcarbamoyltransferase, found in Streptococcus pneumoniae serotype 2 (strain D39 / NCTC 7466).